Reading from the N-terminus, the 389-residue chain is S-adenosylmethionine synthase (389 aa).

His-16 contributes to the ATP binding site. Asp-18 is a Mg(2+) binding site. Glu-44 is a K(+) binding site. L-methionine-binding residues include Glu-57 and Gln-101. The segment at 101–111 (QSVDIAQGVNE) is flexible loop. ATP contacts are provided by residues 168-170 (DAK), 234-235 (RF), Asp-243, 249-250 (RK), Ala-266, and Lys-270. Asp-243 is a binding site for L-methionine. Residue Lys-274 coordinates L-methionine.

It belongs to the AdoMet synthase family. As to quaternary structure, homotetramer; dimer of dimers. It depends on Mg(2+) as a cofactor. K(+) is required as a cofactor.

The protein localises to the cytoplasm. It carries out the reaction L-methionine + ATP + H2O = S-adenosyl-L-methionine + phosphate + diphosphate. It functions in the pathway amino-acid biosynthesis; S-adenosyl-L-methionine biosynthesis; S-adenosyl-L-methionine from L-methionine: step 1/1. Its function is as follows. Catalyzes the formation of S-adenosylmethionine (AdoMet) from methionine and ATP. The overall synthetic reaction is composed of two sequential steps, AdoMet formation and the subsequent tripolyphosphate hydrolysis which occurs prior to release of AdoMet from the enzyme. This chain is S-adenosylmethionine synthase, found in Magnetococcus marinus (strain ATCC BAA-1437 / JCM 17883 / MC-1).